Here is a 428-residue protein sequence, read N- to C-terminus: tRNA(Ile)-lysidine synthase (428 aa).

28-33 is an ATP binding site; it reads SGGVDS.

Belongs to the tRNA(Ile)-lysidine synthase family.

It localises to the cytoplasm. It catalyses the reaction cytidine(34) in tRNA(Ile2) + L-lysine + ATP = lysidine(34) in tRNA(Ile2) + AMP + diphosphate + H(+). Its function is as follows. Ligates lysine onto the cytidine present at position 34 of the AUA codon-specific tRNA(Ile) that contains the anticodon CAU, in an ATP-dependent manner. Cytidine is converted to lysidine, thus changing the amino acid specificity of the tRNA from methionine to isoleucine. This Streptococcus pyogenes serotype M3 (strain ATCC BAA-595 / MGAS315) protein is tRNA(Ile)-lysidine synthase.